The following is a 90-amino-acid chain: UPF0297 protein LVIS_1222 (90 aa).

This sequence belongs to the UPF0297 family.

The chain is UPF0297 protein LVIS_1222 from Levilactobacillus brevis (strain ATCC 367 / BCRC 12310 / CIP 105137 / JCM 1170 / LMG 11437 / NCIMB 947 / NCTC 947) (Lactobacillus brevis).